A 78-amino-acid chain; its full sequence is Translation initiation factor IF-1, chloroplastic (78 aa).

Residues 1-72 form the S1-like domain; the sequence is MKKQNLIEME…TKGRITYRLR (72 aa).

Belongs to the IF-1 family. As to quaternary structure, component of the 30S ribosomal translation pre-initiation complex which assembles on the 30S ribosome in the order IF-2 and IF-3, IF-1 and N-formylmethionyl-tRNA(fMet); mRNA recruitment can occur at any time during PIC assembly.

It localises to the plastid. Its subcellular location is the chloroplast. Its function is as follows. One of the essential components for the initiation of protein synthesis. Stabilizes the binding of IF-2 and IF-3 on the 30S subunit to which N-formylmethionyl-tRNA(fMet) subsequently binds. Helps modulate mRNA selection, yielding the 30S pre-initiation complex (PIC). Upon addition of the 50S ribosomal subunit IF-1, IF-2 and IF-3 are released leaving the mature 70S translation initiation complex. The chain is Translation initiation factor IF-1, chloroplastic from Chaetosphaeridium globosum (Charophycean green alga).